Consider the following 387-residue polypeptide: Probable NADH-dependent butanol dehydrogenase 1 (387 aa).

It belongs to the iron-containing alcohol dehydrogenase family.

The protein operates within alcohol metabolism; butanol biosynthesis. In Bacillus subtilis (strain 168), this protein is Probable NADH-dependent butanol dehydrogenase 1 (yugJ).